A 210-amino-acid polypeptide reads, in one-letter code: uncharacterized protein (210 aa).

4 helical membrane passes run 5–25, 50–70, 75–95, and 155–175; these read LAYI…TMLV, FWTV…VILF, YLGA…KSMF, and IILA…LVYI.

This sequence belongs to the Rht family.

It is found in the cell membrane. This is an uncharacterized protein from Bacillus subtilis (strain 168).